A 156-amino-acid polypeptide reads, in one-letter code: Transcription antitermination protein NusB (156 aa).

The protein belongs to the NusB family.

In terms of biological role, involved in transcription antitermination. Required for transcription of ribosomal RNA (rRNA) genes. Binds specifically to the boxA antiterminator sequence of the ribosomal RNA (rrn) operons. The sequence is that of Transcription antitermination protein NusB from Vibrio cholerae serotype O1 (strain ATCC 39541 / Classical Ogawa 395 / O395).